The chain runs to 182 residues: Nudix hydrolase 17, mitochondrial (182 aa).

Residues 1–26 (MGVEKMVCLASRTGRQFQRYNKGRRQ) constitute a mitochondrion transit peptide. The Nudix hydrolase domain maps to 27–158 (VVGCVPYRFK…WMKEALDVLV (132 aa)). The Nudix box motif lies at 65 to 86 (GGWELDESVEEAASRECLEEAG). Mg(2+) contacts are provided by glutamate 80 and glutamate 84.

Belongs to the Nudix hydrolase family. Mg(2+) serves as cofactor. Mn(2+) is required as a cofactor. Expressed in roots, leaves, stems and inflorescences.

The protein localises to the mitochondrion. Probably mediates the hydrolysis of some nucleoside diphosphate derivatives. The sequence is that of Nudix hydrolase 17, mitochondrial (NUDT17) from Arabidopsis thaliana (Mouse-ear cress).